A 469-amino-acid chain; its full sequence is 6-phospho-beta-galactosidase (469 aa).

Residues Gln-18, His-115, Asn-158, Glu-159, and Asn-296 each coordinate D-galactose 6-phosphate. Glu-159 functions as the Proton donor in the catalytic mechanism. Residue Glu-374 is the Nucleophile of the active site. D-galactose 6-phosphate contacts are provided by Ser-429, Trp-430, Lys-436, and Tyr-438.

It belongs to the glycosyl hydrolase 1 family.

It carries out the reaction a 6-phospho-beta-D-galactoside + H2O = D-galactose 6-phosphate + an alcohol. It participates in carbohydrate metabolism; lactose degradation; D-galactose 6-phosphate and beta-D-glucose from lactose 6-phosphate: step 1/1. This is 6-phospho-beta-galactosidase from Staphylococcus haemolyticus (strain JCSC1435).